Here is a 269-residue protein sequence, read N- to C-terminus: tRNA pseudouridine synthase A (269 aa).

The Nucleophile role is filled by aspartate 55. Tyrosine 111 is a binding site for substrate.

This sequence belongs to the tRNA pseudouridine synthase TruA family.

It catalyses the reaction uridine(38/39/40) in tRNA = pseudouridine(38/39/40) in tRNA. Functionally, formation of pseudouridine at positions 38, 39 and 40 in the anticodon stem and loop of transfer RNAs. This Methanosarcina acetivorans (strain ATCC 35395 / DSM 2834 / JCM 12185 / C2A) protein is tRNA pseudouridine synthase A.